Reading from the N-terminus, the 380-residue chain is 4-hydroxy-3-methylbut-2-en-1-yl diphosphate synthase (flavodoxin) (380 aa).

[4Fe-4S] cluster is bound by residues cysteine 273, cysteine 276, cysteine 308, and glutamate 315.

This sequence belongs to the IspG family. Requires [4Fe-4S] cluster as cofactor.

The catalysed reaction is (2E)-4-hydroxy-3-methylbut-2-enyl diphosphate + oxidized [flavodoxin] + H2O + 2 H(+) = 2-C-methyl-D-erythritol 2,4-cyclic diphosphate + reduced [flavodoxin]. It participates in isoprenoid biosynthesis; isopentenyl diphosphate biosynthesis via DXP pathway; isopentenyl diphosphate from 1-deoxy-D-xylulose 5-phosphate: step 5/6. In terms of biological role, converts 2C-methyl-D-erythritol 2,4-cyclodiphosphate (ME-2,4cPP) into 1-hydroxy-2-methyl-2-(E)-butenyl 4-diphosphate. This is 4-hydroxy-3-methylbut-2-en-1-yl diphosphate synthase (flavodoxin) from Leifsonia xyli subsp. xyli (strain CTCB07).